Consider the following 625-residue polypeptide: Interferon-induced GTP-binding protein Mx2 (625 aa).

The 274-residue stretch at 29 to 302 (DLALPAIAVI…LVFHIGRCLP (274 aa)) folds into the Dynamin-type G domain. Residues 39–46 (GDQSSGKS) are G1 motif. 39 to 46 (GDQSSGKS) contributes to the GTP binding site. Residues 64–66 (VTR) are G2 motif. The G3 motif stretch occupies residues 140 to 143 (DLPG). GTP is bound by residues 140 to 144 (DLPGI) and 209 to 212 (TKPD). The tract at residues 209–212 (TKPD) is G4 motif. The tract at residues 241 to 244 (RCRG) is G5 motif. One can recognise a GED domain in the interval 539–625 (REELTCHLKS…TEALKYLAKF (87 aa)).

It belongs to the TRAFAC class dynamin-like GTPase superfamily. Dynamin/Fzo/YdjA family.

The protein localises to the cytoplasm. The sequence is that of Interferon-induced GTP-binding protein Mx2 (mx2) from Ictalurus punctatus (Channel catfish).